A 578-amino-acid polypeptide reads, in one-letter code: Probable arginine--tRNA ligase, mitochondrial (578 aa).

The N-terminal 16 residues, 1–16 (MACGFRRSIASQLSRV), are a transit peptide targeting the mitochondrion. L-arginine-binding positions include 133-135 (SPN), His144, Tyr322, Asp326, and Gln350. Residues 133–144 (SPNVAKKFHVGH) carry the 'HIGH' region motif. Position 568 is an N6-acetyllysine (Lys568).

This sequence belongs to the class-I aminoacyl-tRNA synthetase family.

It localises to the mitochondrion membrane. The enzyme catalyses tRNA(Arg) + L-arginine + ATP = L-arginyl-tRNA(Arg) + AMP + diphosphate. Functionally, catalyzes the attachment of arginine to tRNA(Arg) in a two-step reaction: arginine is first activated by ATP to form Arg-AMP and then transferred to the acceptor end of tRNA(Arg). The protein is Probable arginine--tRNA ligase, mitochondrial (RARS2) of Bos taurus (Bovine).